Reading from the N-terminus, the 319-residue chain is Myoblast determination protein 1 (319 aa).

A Peptide (Met-Gly) (interchain with G-Cter in ubiquitin) cross-link involves residue Met1. Position 104 is an N6-methyllysine; by EHMT2 (Lys104). Residues 109 to 160 (DRRKAATMRERRRLSKVNEAFETLKRCTSSNPNQRLPKVEILRNAIRYIEGL) form the bHLH domain. Disordered regions lie at residues 174 to 222 (AAAA…GARR) and 267 to 319 (PALL…YQVL). A compositionally biased stretch (polar residues) spans 197–207 (SDASSPRSNCS). Residues 267 to 276 (PALLLADAPP) are compositionally biased toward low complexity.

As to quaternary structure, efficient DNA binding requires dimerization with another bHLH protein. Seems to form active heterodimers with ITF-2. Interacts with SUV39H1. Interacts with DDX5. Interacts with CHD2. Interacts with TSC22D3. Interacts with SETD3. Interacts with P-TEFB complex; promotes the transcriptional activity of MYOD1 through its CDK9-mediated phosphorylation. Interacts with CSRP3. Interacts with NUPR1. In terms of processing, phosphorylated by CDK9. This phosphorylation promotes its function in muscle differentiation. Post-translationally, acetylated by a complex containing EP300 and PCAF. The acetylation is essential to activate target genes. Conversely, its deacetylation by SIRT1 inhibits its function. Ubiquitinated on the N-terminus; which is required for proteasomal degradation. In terms of processing, methylation at Lys-104 by EHMT2/G9a inhibits myogenic activity.

Its subcellular location is the nucleus. In terms of biological role, acts as a transcriptional activator that promotes transcription of muscle-specific target genes and plays a role in muscle differentiation. Together with MYF5 and MYOG, co-occupies muscle-specific gene promoter core region during myogenesis. Induces fibroblasts to differentiate into myoblasts. Interacts with and is inhibited by the twist protein. This interaction probably involves the basic domains of both proteins. The sequence is that of Myoblast determination protein 1 (MYOD1) from Ovis aries (Sheep).